A 258-amino-acid polypeptide reads, in one-letter code: Phosphoribosylaminoimidazole-succinocarboxamide synthase (258 aa).

Belongs to the SAICAR synthetase family.

It carries out the reaction 5-amino-1-(5-phospho-D-ribosyl)imidazole-4-carboxylate + L-aspartate + ATP = (2S)-2-[5-amino-1-(5-phospho-beta-D-ribosyl)imidazole-4-carboxamido]succinate + ADP + phosphate + 2 H(+). It functions in the pathway purine metabolism; IMP biosynthesis via de novo pathway; 5-amino-1-(5-phospho-D-ribosyl)imidazole-4-carboxamide from 5-amino-1-(5-phospho-D-ribosyl)imidazole-4-carboxylate: step 1/2. The sequence is that of Phosphoribosylaminoimidazole-succinocarboxamide synthase from Maricaulis maris (strain MCS10) (Caulobacter maris).